The primary structure comprises 142 residues: Large ribosomal subunit protein uL11 (142 aa).

Belongs to the universal ribosomal protein uL11 family. Part of the ribosomal stalk of the 50S ribosomal subunit. Interacts with L10 and the large rRNA to form the base of the stalk. L10 forms an elongated spine to which L12 dimers bind in a sequential fashion forming a multimeric L10(L12)X complex. One or more lysine residues are methylated.

Forms part of the ribosomal stalk which helps the ribosome interact with GTP-bound translation factors. The sequence is that of Large ribosomal subunit protein uL11 from Bradyrhizobium sp. (strain BTAi1 / ATCC BAA-1182).